We begin with the raw amino-acid sequence, 123 residues long: Loki profilin-3 (123 aa).

This sequence belongs to the Asgard profilin family.

The protein localises to the cytoplasm. It localises to the cytoskeleton. Its function is as follows. Binds to actin and affects the structure of the cytoskeleton. At high concentrations inhibits spontaneous rabbit actin nucleation. This strongly suggests this archaea has a profilin-regulated actin system, and actin-type genes can be identified in this organism. The chain is Loki profilin-3 from Lokiarchaeum sp. (strain GC14_75).